The following is a 175-amino-acid chain: Adenine phosphoribosyltransferase (175 aa).

It belongs to the purine/pyrimidine phosphoribosyltransferase family. In terms of assembly, homodimer.

It is found in the cytoplasm. It carries out the reaction AMP + diphosphate = 5-phospho-alpha-D-ribose 1-diphosphate + adenine. It functions in the pathway purine metabolism; AMP biosynthesis via salvage pathway; AMP from adenine: step 1/1. Its function is as follows. Catalyzes a salvage reaction resulting in the formation of AMP, that is energically less costly than de novo synthesis. This Francisella tularensis subsp. holarctica (strain FTNF002-00 / FTA) protein is Adenine phosphoribosyltransferase.